The following is a 230-amino-acid chain: Large ribosomal subunit protein uL1 (230 aa).

This sequence belongs to the universal ribosomal protein uL1 family. Part of the 50S ribosomal subunit.

Its function is as follows. Binds directly to 23S rRNA. The L1 stalk is quite mobile in the ribosome, and is involved in E site tRNA release. Functionally, protein L1 is also a translational repressor protein, it controls the translation of the L11 operon by binding to its mRNA. This chain is Large ribosomal subunit protein uL1, found in Nitrobacter hamburgensis (strain DSM 10229 / NCIMB 13809 / X14).